Reading from the N-terminus, the 276-residue chain is Large ribosomal subunit protein uL2 (276 aa).

The interval 222–276 (GVAMNPIDHPLGGGEGRSSGGRHPVSPWGMPTKGYKTRDRKKASSKLIIKRRGQK) is disordered. Residues 259-276 (RDRKKASSKLIIKRRGQK) are compositionally biased toward basic residues.

It belongs to the universal ribosomal protein uL2 family. In terms of assembly, part of the 50S ribosomal subunit. Forms a bridge to the 30S subunit in the 70S ribosome.

Its function is as follows. One of the primary rRNA binding proteins. Required for association of the 30S and 50S subunits to form the 70S ribosome, for tRNA binding and peptide bond formation. It has been suggested to have peptidyltransferase activity; this is somewhat controversial. Makes several contacts with the 16S rRNA in the 70S ribosome. The protein is Large ribosomal subunit protein uL2 of Nitratidesulfovibrio vulgaris (strain ATCC 29579 / DSM 644 / CCUG 34227 / NCIMB 8303 / VKM B-1760 / Hildenborough) (Desulfovibrio vulgaris).